A 209-amino-acid chain; its full sequence is MEVKLWNDKREREMYENFAELYAIIKATEKLEKAYIRDLISPSEYETECQKLIVHFKTLSASLKDMVPNIERFAETYKMDCSAAVYRLVTSGVPATVEHRAAASASTSSSASVVAECVQNFITSMDSLKLNMVAVDQVYPLLSDLSASLNKLSILPPDFEGKIKMKEWLLRLSKMGASDELTEQQARQLHFDLESSYNSFMAALPNAGN.

Residues 1-99 (MEVKLWNDKR…TSGVPATVEH (99 aa)) form the VPS28 N-terminal domain. The VPS28 C-terminal domain occupies 109-205 (SSASVVAECV…SYNSFMAALP (97 aa)).

The protein belongs to the VPS28 family. In terms of assembly, component of the endosomal sorting required for transport complex I (ESCRT-I), composed of ELC, VPS28 and VPS37. Interacts with ELC.

It is found in the endosome. In terms of biological role, component of the ESCRT-I complex (endosomal sorting complex required for transport I), a regulator of vesicular trafficking process. Required for the sorting of endocytic ubiquitinated cargos into multivesicular bodies (MVBs). Mediates the association to the ESCRT-0 complex. In Arabidopsis thaliana (Mouse-ear cress), this protein is Vacuolar protein sorting-associated protein 28 homolog 1 (VPS28-1).